The following is a 336-amino-acid chain: Probable allantoicase (336 aa).

This sequence belongs to the allantoicase family.

The catalysed reaction is allantoate + H2O = (S)-ureidoglycolate + urea. The protein operates within nitrogen metabolism; (S)-allantoin degradation; (S)-ureidoglycolate from allantoate (aminidohydrolase route): step 1/1. The sequence is that of Probable allantoicase from Acinetobacter baumannii (strain ATCC 17978 / DSM 105126 / CIP 53.77 / LMG 1025 / NCDC KC755 / 5377).